Reading from the N-terminus, the 262-residue chain is Hydroxyethylthiazole kinase (262 aa).

Residue Met43 participates in substrate binding. ATP is bound by residues Arg118 and Thr164. Substrate is bound at residue Ala191.

Belongs to the Thz kinase family. Requires Mg(2+) as cofactor.

The enzyme catalyses 5-(2-hydroxyethyl)-4-methylthiazole + ATP = 4-methyl-5-(2-phosphooxyethyl)-thiazole + ADP + H(+). It functions in the pathway cofactor biosynthesis; thiamine diphosphate biosynthesis; 4-methyl-5-(2-phosphoethyl)-thiazole from 5-(2-hydroxyethyl)-4-methylthiazole: step 1/1. In terms of biological role, catalyzes the phosphorylation of the hydroxyl group of 4-methyl-5-beta-hydroxyethylthiazole (THZ). This Cereibacter sphaeroides (strain ATCC 17029 / ATH 2.4.9) (Rhodobacter sphaeroides) protein is Hydroxyethylthiazole kinase.